A 548-amino-acid chain; its full sequence is ATP synthase subunit alpha (548 aa).

Residue 172 to 179 (GDRKTGKT) coordinates ATP. Residues 526–548 (AEAMDEADVEKESVKVRKPAPKK) are disordered.

Belongs to the ATPase alpha/beta chains family. In terms of assembly, F-type ATPases have 2 components, CF(1) - the catalytic core - and CF(0) - the membrane proton channel. CF(1) has five subunits: alpha(3), beta(3), gamma(1), delta(1), epsilon(1). CF(0) has three main subunits: a(1), b(2) and c(9-12). The alpha and beta chains form an alternating ring which encloses part of the gamma chain. CF(1) is attached to CF(0) by a central stalk formed by the gamma and epsilon chains, while a peripheral stalk is formed by the delta and b chains.

Its subcellular location is the cell membrane. The catalysed reaction is ATP + H2O + 4 H(+)(in) = ADP + phosphate + 5 H(+)(out). Functionally, produces ATP from ADP in the presence of a proton gradient across the membrane. The alpha chain is a regulatory subunit. This is ATP synthase subunit alpha from Mycolicibacterium gilvum (strain PYR-GCK) (Mycobacterium gilvum (strain PYR-GCK)).